The following is a 263-amino-acid chain: uncharacterized protein (263 aa).

Residue 31-38 (GPTGSGKT) participates in ATP binding.

The protein belongs to the CbbQ/NirQ/NorQ/GpvN family.

This is an uncharacterized protein from Staphylococcus aureus (strain NCTC 8325 / PS 47).